The following is a 110-amino-acid chain: BolA-like protein 3 (110 aa).

Belongs to the BolA/IbaG family. As to quaternary structure, interacts with NFU1.

It localises to the mitochondrion. Acts as a mitochondrial iron-sulfur (Fe-S) cluster assembly factor that facilitates (Fe-S) cluster insertion into a subset of mitochondrial proteins. Probably acts together with NFU1. The polypeptide is BolA-like protein 3 (Bola3) (Mus musculus (Mouse)).